Consider the following 202-residue polypeptide: Endothelin-1 (202 aa).

A signal peptide spans 1–25 (MDYLPVLFSLLLVVFQGAPEAAVLG). Positions 26 to 50 (AELSTGPDSGGEKPAPSAPWRPRRS) are excised as a propeptide. Residues 28-48 (LSTGPDSGGEKPAPSAPWRPR) form a disordered region. Intrachain disulfides connect cysteine 53-cysteine 67 and cysteine 55-cysteine 63. Positions 74 to 202 (VNTPEHIVPY…EKKVTHNRTH (129 aa)) are excised as a propeptide. The segment at 110–124 (CQCASQKDKKCWTFC) is endothelin-like.

This sequence belongs to the endothelin/sarafotoxin family.

It is found in the secreted. Its function is as follows. Endothelins are endothelium-derived vasoconstrictor peptides. Probable ligand for G-protein coupled receptors EDNRA and EDNRB which activates PTK2B, BCAR1, BCAR3 and, GTPases RAP1 and RHOA cascade in glomerular mesangial cells. Also binds the DEAR/FBXW7-AS1 receptor. Promotes mesenteric arterial wall remodeling via activation of ROCK signaling and subsequent colocalization of NFATC3 with F-actin filaments. NFATC3 then translocates to the nucleus where it subsequently promotes the transcription of the smooth muscle hypertrophy and differentiation marker ACTA2. The polypeptide is Endothelin-1 (EDN1) (Felis catus (Cat)).